The chain runs to 143 residues: Large ribosomal subunit protein bL28c (143 aa).

Residues 1-66 (MTTMATQGAW…SFPGIQPIVA (66 aa)) constitute a chloroplast transit peptide.

The protein belongs to the bacterial ribosomal protein bL28 family. Part of the 50S ribosomal subunit.

It is found in the plastid. The protein resides in the chloroplast. This Arabidopsis thaliana (Mouse-ear cress) protein is Large ribosomal subunit protein bL28c (RPL28).